The following is a 155-amino-acid chain: Arginine repressor (155 aa).

It belongs to the ArgR family.

Its subcellular location is the cytoplasm. It functions in the pathway amino-acid biosynthesis; L-arginine biosynthesis [regulation]. Its function is as follows. Regulates arginine biosynthesis genes. The polypeptide is Arginine repressor (Mannheimia succiniciproducens (strain KCTC 0769BP / MBEL55E)).